Here is a 46-residue protein sequence, read N- to C-terminus: Large ribosomal subunit protein bL34c (46 aa).

The segment at 1 to 46 (MSKRTLEGSHRKKVRKSGFLSRSQSPTGRRILKARRKKGRKMLVKY) is disordered. The segment covering 30–46 (RILKARRKKGRKMLVKY) has biased composition (basic residues).

Belongs to the bacterial ribosomal protein bL34 family.

Its subcellular location is the plastid. The protein localises to the cyanelle. The sequence is that of Large ribosomal subunit protein bL34c (rpl34) from Cyanophora paradoxa.